The following is a 748-amino-acid chain: Structure-specific endonuclease subunit SLX4 (748 aa).

Polar residues predominate over residues Lys-62 to Thr-75. The disordered stretch occupies residues Lys-62–Asn-104. Residue Thr-72 is modified to Phosphothreonine; by ATR and ATM. Residues Thr-76–Lys-88 show a composition bias toward basic and acidic residues. Thr-113 carries the post-translational modification Phosphothreonine; by ATR and ATM. 2 disordered regions span residues Ile-215–Lys-236 and Glu-277–Leu-303. Over residues Asn-222 to Lys-236 the composition is skewed to basic and acidic residues. Residues Glu-277–Gln-298 show a composition bias toward polar residues. Phosphoserine; by ATR and ATM is present on Ser-289. Thr-319 is modified (phosphothreonine; by ATR and ATM). Phosphoserine; by ATR and ATM is present on residues Ser-329 and Ser-355. Positions Ile-591–Thr-602 are enriched in polar residues. The disordered stretch occupies residues Ile-591–Ser-610.

The protein belongs to the SLX4 family. As to quaternary structure, forms a heterodimer with SLX1. Interacts with RAD1; catalytic subunit of the RAD1-RAD10 endonuclease. Interacts with RTT107. Post-translationally, phosphorylated by ATR (MEC1) and ATM (TEL1) upon DNA damage. This appears to be required for the function with the RAD1-RAD10 endonuclease.

It localises to the nucleus. The protein resides in the cytoplasm. Regulatory subunit that interacts with and increases the activity of different structure-specific endonucleases. Has several distinct roles in protecting genome stability by resolving diverse forms of deleterious DNA structures. Component of the SLX1-SLX4 structure-specific endonuclease that resolves DNA secondary structures generated during DNA repair and recombination. Has endonuclease activity towards branched DNA substrates, introducing single-strand cuts in duplex DNA close to junctions with ss-DNA. Has a preference for simple Y, 5'-flap and replication fork-like structures. It cleaves the strand bearing the 5'-non-homologous arm at the branch site junction and generates ligatable, nicked products from the 5'-flap or replication fork substrates. Plays a critical role in maintaining the integrity of the ribosomal DNA (rDNA) loci, where it has a role in re-starting stalled replication forks. Has Holliday junction resolvase activity in vitro. Interacts with the structure-specific RAD1-RAD10 endonuclease and promotes RAD1-RAD10-dependent 3'-non-homologous tail removal (NHTR) during repair of double-strand breaks by single-strand annealing. SLX4 also promotes recovery from DNA-alkylation-induced replisome stalling during DNA replication by facilitating the error-free mode of lesion bypass. This does not require SLX1 or RAD1-RAD10, but probably RTT107. This chain is Structure-specific endonuclease subunit SLX4, found in Saccharomyces cerevisiae (strain RM11-1a) (Baker's yeast).